A 314-amino-acid polypeptide reads, in one-letter code: Protein REGULATOR OF FATTY ACID COMPOSITION 3, chloroplastic (314 aa).

A chloroplast-targeting transit peptide spans 1–47; that stretch reads MESLLHASSSLVSLRPRIDGRDSFINPSRVCLNPSLGRRGSKPLPLV. 2 disordered regions span residues 49 to 73 and 214 to 314; these read AAKK…ATGP and AITE…NVGG. Over residues 56–69 the composition is skewed to basic and acidic residues; sequence KKDDNHNFSARPDE. Composition is skewed to acidic residues over residues 233 to 269 and 277 to 294; these read EYYD…DDDG and GDEE…EQEE. Residues 295–308 show a composition bias toward basic and acidic residues; that stretch reads GQDKSTNGRRETRR.

Belongs to the bacterial ribosomal protein bS6 family. As to quaternary structure, interacts with CFM3B/SPRT2 in plastids. In terms of tissue distribution, expressed ubiquitously in roots, leaves, stems, flower buds, flowers and siliques.

It localises to the plastid. Its subcellular location is the chloroplast. Prevents non-specific action of the splicing factor CFM3b during plastid rRNA biogenesis to improve the accuracy of plastid rRNA processing. Required for plastid functions such as photosynthesis, intracellular distribution, plastid rRNAs biosynthesis and plastid gene expression in roots. Involved in a sucrose-conditional process important for the organization of root lateral and apical meristems (e.g. establishment of RAM from pericycle and symplasmic connectivity), and subsequent primary and lateral roots development. Modulates C18 unsaturated fatty acid metabolism. This is Protein REGULATOR OF FATTY ACID COMPOSITION 3, chloroplastic from Arabidopsis thaliana (Mouse-ear cress).